We begin with the raw amino-acid sequence, 181 residues long: Ribosome maturation factor RimM (181 aa).

One can recognise a PRC barrel domain in the interval 97–170; sequence AGEFWLPDLM…RIEVVAIPGL (74 aa).

Belongs to the RimM family. As to quaternary structure, binds ribosomal protein uS19.

The protein resides in the cytoplasm. An accessory protein needed during the final step in the assembly of 30S ribosomal subunit, possibly for assembly of the head region. Essential for efficient processing of 16S rRNA. May be needed both before and after RbfA during the maturation of 16S rRNA. It has affinity for free ribosomal 30S subunits but not for 70S ribosomes. The polypeptide is Ribosome maturation factor RimM (Gloeobacter violaceus (strain ATCC 29082 / PCC 7421)).